A 530-amino-acid polypeptide reads, in one-letter code: uncharacterized protein (530 aa).

This sequence belongs to the mimivirus R640 family.

This is an uncharacterized protein from Acanthamoeba polyphaga (Amoeba).